The sequence spans 134 residues: MDEEYIALLDRAYKLVAPKAQRRAEIPKIEVQNMPRKTVIPNFGQIAKRLNRDIYFMAKFFQRELAVPGTVEGDVFTLHGEKSPKVVEAVYERFIRYYVVCPVCNSIDTELRREGRIYVMRCLACGASTPVKPL.

This sequence belongs to the eIF-2-beta/eIF-5 family. In terms of assembly, heterotrimer composed of an alpha, a beta and a gamma chain.

In terms of biological role, eIF-2 functions in the early steps of protein synthesis by forming a ternary complex with GTP and initiator tRNA. The protein is Translation initiation factor 2 subunit beta of Pyrobaculum neutrophilum (strain DSM 2338 / JCM 9278 / NBRC 100436 / V24Sta) (Thermoproteus neutrophilus).